We begin with the raw amino-acid sequence, 743 residues long: Phosphoribosylformylglycinamidine synthase subunit PurL (743 aa).

His50 is an active-site residue. ATP is bound by residues Tyr53 and Lys92. Glu94 provides a ligand contact to Mg(2+). Substrate-binding positions include 95–98 (SHNH) and Arg117. Residue His96 is the Proton acceptor of the active site. Residue Asp118 participates in Mg(2+) binding. Residue Gln241 participates in substrate binding. Asp269 contributes to the Mg(2+) binding site. 313 to 315 (ESQ) contacts substrate. The ATP site is built by Asp494 and Gly531. Asn532 lines the Mg(2+) pocket. A substrate-binding site is contributed by Ser534.

The protein belongs to the FGAMS family. In terms of assembly, monomer. Part of the FGAM synthase complex composed of 1 PurL, 1 PurQ and 2 PurS subunits.

Its subcellular location is the cytoplasm. It catalyses the reaction N(2)-formyl-N(1)-(5-phospho-beta-D-ribosyl)glycinamide + L-glutamine + ATP + H2O = 2-formamido-N(1)-(5-O-phospho-beta-D-ribosyl)acetamidine + L-glutamate + ADP + phosphate + H(+). It participates in purine metabolism; IMP biosynthesis via de novo pathway; 5-amino-1-(5-phospho-D-ribosyl)imidazole from N(2)-formyl-N(1)-(5-phospho-D-ribosyl)glycinamide: step 1/2. Part of the phosphoribosylformylglycinamidine synthase complex involved in the purines biosynthetic pathway. Catalyzes the ATP-dependent conversion of formylglycinamide ribonucleotide (FGAR) and glutamine to yield formylglycinamidine ribonucleotide (FGAM) and glutamate. The FGAM synthase complex is composed of three subunits. PurQ produces an ammonia molecule by converting glutamine to glutamate. PurL transfers the ammonia molecule to FGAR to form FGAM in an ATP-dependent manner. PurS interacts with PurQ and PurL and is thought to assist in the transfer of the ammonia molecule from PurQ to PurL. The protein is Phosphoribosylformylglycinamidine synthase subunit PurL of Rhizobium meliloti (strain 1021) (Ensifer meliloti).